Consider the following 96-residue polypeptide: Large ribosomal subunit protein uL23 (96 aa).

Belongs to the universal ribosomal protein uL23 family. As to quaternary structure, part of the 50S ribosomal subunit. Contacts protein L29, and trigger factor when it is bound to the ribosome.

Functionally, one of the early assembly proteins it binds 23S rRNA. One of the proteins that surrounds the polypeptide exit tunnel on the outside of the ribosome. Forms the main docking site for trigger factor binding to the ribosome. The protein is Large ribosomal subunit protein uL23 of Bacillus mycoides (strain KBAB4) (Bacillus weihenstephanensis).